Consider the following 847-residue polypeptide: MVIRSLLLLLLAAIVPVFAESGIDAWLRYARLPSSATRGHLTSFPDRIVVLNASKNGPLASASSELHKGIKGILGLDLDVSSRGGKHCSTQKSIVISTLDTYQSACGKLSPKLNLKEDGYWLSTKGGSVQIIGQNERGALYGAFQYLSYLGQGDFSGKAFASNPSAPVRWSNQWDNLNAATAAHGSIERGYGGPSIFFENGLIKEDLSRVPLYGRLLASVGLNGIVINNVNADANLLNETNLQGLKRIADLFRPWGVNVGISLNFASPQVLGDLSTFDPLDDSVIKWWTDKTDRIYQLVPDLAGYLVKANSEGQPGPLTYNRTLAEGANLFAKAVQPHGGIVVFRAFVYDQLNETDWKADRANAAVDFFKSLDGQFDDNVLVQIKYGPIDFQVREPASPLFANLPKTAVSIELEVTQEYLGQQSHLVYLPPLWQTVLGFDMRYNNRQSYVRDIISGEVFGHKLGGYAGVINVGMDDTWLGSHLAMSNMFAYGRLAWNPRADSRDIVEEWTRLTFGLDRDVVSTIADMSLKSWPAYEGYSGNLGIQTLTDILYTHYGANPASQDNNGWGQWTRADSKTIGMDRTVSNGTGNAGQYPKEVAARFEHTQTTPDDLMLWFHHVPYTFRLHSGKSVIQHFYDAHYTGAATVQRFPAAWKSLKSKIDTERYNAVLYKLQYQTGHSLVWRDAITEFYRNLSSIPDQLNRVRNHPHRIEAEDMDLSGFTVVNVSPTECASKYKAIATNGTGTATTRLNVPSGKYTVAVNYYDVINGTASYDVLLNGKSLGKWKGDSETHLGHDFSTFLDCHSAIRITFEGVRISRGDKLTIRGTGNAQEQAAIDYVSILPQGVVD.

Positions 1–19 (MVIRSLLLLLLAAIVPVFA) are cleaved as a signal peptide. Residues N52, N238, N321, N353, N586, N692, N740, and N767 are each glycosylated (N-linked (GlcNAc...) asparagine).

It belongs to the glycosyl hydrolase 67 family.

It localises to the secreted. The enzyme catalyses an alpha-D-glucuronoside + H2O = D-glucuronate + an alcohol. Releases 4-O-methylglucuronic acid from xylan. In Hypocrea jecorina (Trichoderma reesei), this protein is Alpha-glucuronidase.